A 75-amino-acid chain; its full sequence is Large ribosomal subunit protein bL31 (75 aa).

The protein belongs to the bacterial ribosomal protein bL31 family. Type A subfamily. Part of the 50S ribosomal subunit.

In terms of biological role, binds the 23S rRNA. This chain is Large ribosomal subunit protein bL31, found in Chlorobaculum tepidum (strain ATCC 49652 / DSM 12025 / NBRC 103806 / TLS) (Chlorobium tepidum).